The chain runs to 731 residues: Unconventional prefoldin RPB5 interactor-like protein (731 aa).

Coiled-coil stretches lie at residues 91 to 115 (RLKL…KLHT) and 143 to 176 (LAEH…LRKL). Over residues 205–217 (PLKSTNESSPKSL) the composition is skewed to polar residues. 3 disordered regions span residues 205–224 (PLKS…EEDE), 259–302 (MSGE…EEEV), and 370–396 (ASEE…TVSE). Residues 220–258 (EEEDELWKKLEAEEQNEADELSSEAEESLKTTDNLVRQL) adopt a coiled-coil conformation. Residues 285 to 300 (ISEDDGDDDDEGDQEE) show a composition bias toward acidic residues. Coiled coils occupy residues 357–379 (DDLQ…EVVE) and 452–477 (SIKT…VKEN). Composition is skewed to polar residues over residues 508–518 (GAIPSPSSDQS) and 575–599 (SQFS…TSND). 3 disordered regions span residues 508-527 (GAIP…KPSD), 567-682 (GSAY…DLRD), and 694-731 (VEKE…LNKT). Positions 611 to 621 (FYEKYEKDRAK) are enriched in basic and acidic residues. Residues 623–644 (SKSNSSEGDATDPESATKSILR) show a composition bias toward polar residues. Positions 661–673 (KKGRKVRNQKKKE) are enriched in basic residues. The segment covering 721 to 731 (RFKEQRALNKT) has biased composition (basic and acidic residues).

It belongs to the RNA polymerase II subunit 5-mediating protein family. Interacts with serine/threonine-protein phosphatases flw/PP1beta9C and Pp1-87B with higher affinity for Pp1-87B.

It localises to the cytoplasm. The protein localises to the chromosome. Its subcellular location is the nucleus. In terms of biological role, inhibits the activity of serine/threonine-protein phosphatases flw/PP1beta9C and Pp1-87B. Required for germ line cell viability and differentiation, normal transcriptional activity and maintenance of DNA integrity. The sequence is that of Unconventional prefoldin RPB5 interactor-like protein from Drosophila melanogaster (Fruit fly).